We begin with the raw amino-acid sequence, 399 residues long: Cell division protein DivIB (399 aa).

2 disordered regions span residues 1–23 and 35–119; these read MSKD…SEWQ and EEEA…ATKE. The Cytoplasmic segment spans residues 1 to 133; the sequence is MSKDKKNEDK…AKIPGIHILR (133 aa). 2 stretches are compositionally biased toward basic and acidic residues: residues 35-65 and 75-119; these read EEEA…KQDQ and ESAK…ATKE. A helical membrane pass occupies residues 134–154; sequence AFTILFPSLLLLFVSAYLLSP. Residues 155–399 lie on the Extracellular side of the membrane; that stretch reads YATMKDIRVE…NQTTQRSSRR (245 aa). The POTRA domain occupies 156–226; sequence ATMKDIRVEG…TKFTIKVKEY (71 aa). Over residues 364–388 the composition is skewed to basic and acidic residues; sequence KAKQEAKEAEKKQEEEQKKQEEESN. A disordered region spans residues 364 to 399; sequence KAKQEAKEAEKKQEEEQKKQEEESNRNQTTQRSSRR. The span at 389-399 shows a compositional bias: polar residues; that stretch reads RNQTTQRSSRR.

The protein belongs to the FtsQ/DivIB family. DivIB subfamily.

It is found in the cell membrane. Cell division protein that may be involved in stabilizing or promoting the assembly of the division complex. In Streptococcus pneumoniae serotype 4 (strain ATCC BAA-334 / TIGR4), this protein is Cell division protein DivIB.